Reading from the N-terminus, the 365-residue chain is Probable 7-methylxanthine methyltransferase 3 (365 aa).

Tyrosine 18 is an S-adenosyl-L-homocysteine binding site. Threonine 25 provides a ligand contact to theobromine. S-adenosyl-L-homocysteine is bound by residues cysteine 62, glutamine 67, aspartate 99, leucine 100, serine 132, and phenylalanine 133. The theobromine site is built by tyrosine 150, histidine 153, and tryptophan 154. The Mg(2+) site is built by asparagine 170, phenylalanine 258, and asparagine 259. Position 311 (phenylalanine 311) interacts with theobromine.

This sequence belongs to the methyltransferase superfamily. Type-7 methyltransferase family. Requires Mg(2+) as cofactor.

The catalysed reaction is 7-methylxanthine + S-adenosyl-L-methionine = theobromine + S-adenosyl-L-homocysteine + H(+). Its pathway is alkaloid biosynthesis. Involved in the biosynthesis of theobromine. In Theobroma cacao (Cacao), this protein is Probable 7-methylxanthine methyltransferase 3.